We begin with the raw amino-acid sequence, 699 residues long: Elongation factor G (699 aa).

The tr-type G domain maps to 8 to 290 (ERYRNIGIMA…AVLDYLPSPV (283 aa)). Residues 17 to 24 (AHIDAGKT), 88 to 92 (DTPGH), and 142 to 145 (NKMD) contribute to the GTP site.

Belongs to the TRAFAC class translation factor GTPase superfamily. Classic translation factor GTPase family. EF-G/EF-2 subfamily.

The protein resides in the cytoplasm. In terms of biological role, catalyzes the GTP-dependent ribosomal translocation step during translation elongation. During this step, the ribosome changes from the pre-translocational (PRE) to the post-translocational (POST) state as the newly formed A-site-bound peptidyl-tRNA and P-site-bound deacylated tRNA move to the P and E sites, respectively. Catalyzes the coordinated movement of the two tRNA molecules, the mRNA and conformational changes in the ribosome. The polypeptide is Elongation factor G (Acidithiobacillus ferrooxidans (strain ATCC 23270 / DSM 14882 / CIP 104768 / NCIMB 8455) (Ferrobacillus ferrooxidans (strain ATCC 23270))).